A 236-amino-acid chain; its full sequence is TVP38/TMEM64 family membrane protein YdjX (236 aa).

The next 5 membrane-spanning stretches (helical) occupy residues 7 to 27, 50 to 70, 72 to 92, 156 to 176, and 192 to 212; these read FLFA…FGLF, LYIL…ILVI, GGIV…ATLA, IAFW…IVIY, and FILQ…LAKL. A VTT domain region spans residues 73-183; that stretch reads GIVFGPLLGT…VIYTVMASDL (111 aa).

Belongs to the TVP38/TMEM64 family.

The protein resides in the cell membrane. This is TVP38/TMEM64 family membrane protein YdjX (ydjX) from Escherichia coli (strain K12).